Reading from the N-terminus, the 188-residue chain is Elongation factor P 1 (188 aa).

Belongs to the elongation factor P family.

It is found in the cytoplasm. It participates in protein biosynthesis; polypeptide chain elongation. In terms of biological role, involved in peptide bond synthesis. Stimulates efficient translation and peptide-bond synthesis on native or reconstituted 70S ribosomes in vitro. Probably functions indirectly by altering the affinity of the ribosome for aminoacyl-tRNA, thus increasing their reactivity as acceptors for peptidyl transferase. The polypeptide is Elongation factor P 1 (efp1) (Porphyromonas gingivalis (strain ATCC BAA-308 / W83)).